Here is a 710-residue protein sequence, read N- to C-terminus: Conserved oligomeric Golgi complex subunit 2 (710 aa).

This sequence belongs to the COG2 family. In terms of assembly, component of the conserved oligomeric Golgi complex which is composed of eight different subunits and is required for normal Golgi morphology and localization.

The protein resides in the golgi apparatus membrane. Its function is as follows. Required for normal Golgi morphology and function. The polypeptide is Conserved oligomeric Golgi complex subunit 2 (Drosophila melanogaster (Fruit fly)).